Reading from the N-terminus, the 1099-residue chain is ATP-dependent helicase/deoxyribonuclease subunit B (1099 aa).

4 residues coordinate [4Fe-4S] cluster: Cys-766, Cys-1056, Cys-1059, and Cys-1065.

This sequence belongs to the helicase family. AddB/RexB type 2 subfamily. In terms of assembly, heterodimer of AddA and RexB. It depends on Mg(2+) as a cofactor. [4Fe-4S] cluster is required as a cofactor.

Functionally, the heterodimer acts as both an ATP-dependent DNA helicase and an ATP-dependent, dual-direction single-stranded exonuclease. Recognizes the chi site generating a DNA molecule suitable for the initiation of homologous recombination. This subunit has 5' -&gt; 3' nuclease activity but not helicase activity. The sequence is that of ATP-dependent helicase/deoxyribonuclease subunit B from Lactococcus lactis subsp. cremoris (strain SK11).